Reading from the N-terminus, the 240-residue chain is Transmembrane protein 65 (240 aa).

Residues 1 to 61 (MSRLLPLLRS…RRLGTHPKKE (61 aa)) constitute a mitochondrion transit peptide. Over 62–110 (PMEALNTAQGARDFIYSLHSTERSCLLKELHRFESIAIAQEKLEAPPPT) the chain is Cytoplasmic. A helical transmembrane segment spans residues 111-131 (PGQLRYVFIHNAIPFIGFGFL). The Extracellular portion of the chain corresponds to 132-142 (DNAIMIVAGTH). Residues 143–165 (IEMSIGIILGISTMAAAALGNLV) traverse the membrane as a helical segment. Over 166-209 (SDLAGLGLAGYVEALASRLGLSIPDLTPKQVDMWQTRLSTHLGK) the chain is Cytoplasmic. The helical transmembrane segment at 210-230 (AVGVTIGCILGMFPLIFFGGG) threads the bilayer. Residues 231–240 (EEDEKLETKS) lie on the Extracellular side of the membrane.

As to quaternary structure, monomer. Homodimer. Interacts with GJA1. Interacts weakly with DSP. Interacts with SCN1B. As to expression, predominantly expressed the ventricular tissue (at protein level).

It is found in the cell membrane. It localises to the mitochondrion inner membrane. Functionally, essential for maintaining proper cardiac intercalated disk (ICD) structure and function as well as cardiac conduction velocity in the heart. Its association with SCN1B is required for stabilizing the perinexus in the ICD and for localization of GJA1 and SCN5A to the ICD. May regulate the function of the gap junction protein GJA1 and may contribute to the stability and proper localization of GJA1 to cardiac intercalated disk thereby regulating gap junction communication. May also play a role in the regulation of mitochondrial respiration and mitochondrial DNA copy number maintenance. In Homo sapiens (Human), this protein is Transmembrane protein 65 (TMEM65).